A 545-amino-acid chain; its full sequence is Thermosome subunit (545 aa).

This sequence belongs to the TCP-1 chaperonin family. Forms an oligomeric complex of eight-membered rings.

Molecular chaperone; binds unfolded polypeptides in vitro, and has a weak ATPase activity. The sequence is that of Thermosome subunit (ths) from Desulfurococcus sp. (strain SY).